Reading from the N-terminus, the 186-residue chain is Elongation factor P (186 aa).

It belongs to the elongation factor P family.

It is found in the cytoplasm. It functions in the pathway protein biosynthesis; polypeptide chain elongation. Its function is as follows. Involved in peptide bond synthesis. Stimulates efficient translation and peptide-bond synthesis on native or reconstituted 70S ribosomes in vitro. Probably functions indirectly by altering the affinity of the ribosome for aminoacyl-tRNA, thus increasing their reactivity as acceptors for peptidyl transferase. This is Elongation factor P from Brucella canis (strain ATCC 23365 / NCTC 10854 / RM-666).